Consider the following 279-residue polypeptide: Proteasome subunit beta (279 aa).

Positions 1-53 (MAAAFDPSGRLPDLFTSAGTSSFSAFLSMAAPELLPGRRPLPPGTAADLTPHA) are cleaved as a propeptide — removed in mature form; by autocatalysis. The Nucleophile role is filled by threonine 54.

The protein belongs to the peptidase T1B family. The 20S proteasome core is composed of 14 alpha and 14 beta subunits that assemble into four stacked heptameric rings, resulting in a barrel-shaped structure. The two inner rings, each composed of seven catalytic beta subunits, are sandwiched by two outer rings, each composed of seven alpha subunits. The catalytic chamber with the active sites is on the inside of the barrel. Has a gated structure, the ends of the cylinder being occluded by the N-termini of the alpha-subunits. Is capped by the proteasome-associated ATPase, ARC.

The protein resides in the cytoplasm. The enzyme catalyses Cleavage of peptide bonds with very broad specificity.. The protein operates within protein degradation; proteasomal Pup-dependent pathway. Its activity is regulated as follows. The formation of the proteasomal ATPase ARC-20S proteasome complex, likely via the docking of the C-termini of ARC into the intersubunit pockets in the alpha-rings, may trigger opening of the gate for substrate entry. Interconversion between the open-gate and close-gate conformations leads to a dynamic regulation of the 20S proteasome proteolysis activity. In terms of biological role, component of the proteasome core, a large protease complex with broad specificity involved in protein degradation. This is Proteasome subunit beta from Salinispora arenicola (strain CNS-205).